A 634-amino-acid polypeptide reads, in one-letter code: Sodium-dependent neutral amino acid transporter B(0)AT1 (634 aa).

The Cytoplasmic segment spans residues 1–41 (MVRLVLPNPGLDTRILSLAELETIEQEEASSRPKWDNKAQY). Phosphoserine is present on Ser-17. Residues 42–62 (LLTCVGFCVGLGNVWRFPYLC) form a helical membrane-spanning segment. The Extracellular portion of the chain corresponds to 63–65 (QSH). A helical transmembrane segment spans residues 66-86 (GGGAFMIPFLILLVLEGIPLL). Topologically, residues 87-120 (HLEFAIGQRLRRGSLGVWSSIHPALKGVGLTSML) are cytoplasmic. The helical transmembrane segment at 121 to 141 (VSFVVGLYYNTIISWIMWYLF) threads the bilayer. Residues 142 to 192 (NSFQEPLPWSECPLNENQTGYVDECARSSPVDYFWYRETLNISTSISDSGS) lie on the Extracellular side of the membrane. N-linked (GlcNAc...) asparagine glycosylation is found at Asn-158 and Asn-182. The helical transmembrane segment at 193–213 (IQWRMLLCLACAWSVLYMCTI) threads the bilayer. Topologically, residues 214–221 (RGIETTGK) are cytoplasmic. Residues 222-242 (VVYITSTLPYVVLTIFLIRGL) form a helical membrane-spanning segment. The Extracellular portion of the chain corresponds to 243-268 (TLKGATKGIIYLFTPNVTELANPVTW). Residue Asn-258 is glycosylated (N-linked (GlcNAc...) asparagine). The chain crosses the membrane as a helical span at residues 269-289 (LDAGAQVFFSFSLAFGGLISF). At 290–304 (SSYNSVHNNCERDSV) the chain is on the cytoplasmic side. Residues 305-325 (IVSIINGFTSVYVAIVIYSII) traverse the membrane as a helical segment. The Extracellular portion of the chain corresponds to 326-413 (GFRATQRYDD…TEAITKMPVS (88 aa)). Residues Asn-354 and Asn-368 are each glycosylated (N-linked (GlcNAc...) asparagine). Residues 414-434 (PLWSVLFFIMLFCLGLSSMFG) form a helical membrane-spanning segment. Over 435–456 (NMEGVVVPLQDLKVIPPKWPKE) the chain is Cytoplasmic. Residues 457–477 (LLTGLICLGTFLIGFIFTLNS) traverse the membrane as a helical segment. Over 478 to 487 (GQYWLSLLDS) the chain is Extracellular. Residues 488–508 (YAVSIPLLIIAFCEMFSVVYV) traverse the membrane as a helical segment. At 509 to 531 (YGVDRFNKDIEFMIGHKPNIFWQ) the chain is on the cytoplasmic side. Residues 532–552 (VTWRVVSPLLMLIILVFFFVV) form a helical membrane-spanning segment. The Extracellular portion of the chain corresponds to 553–581 (QVSQELTYSIWNPGYEEFPKSQKISHPNW). A helical membrane pass occupies residues 582 to 602 (VYAVVVIVAGVPSLTIPSYAI). Over 603-634 (YKLIRNCCQKPGDRQGLVSTLSTASMNGDLKY) the chain is Cytoplasmic. Ser-627 carries the phosphoserine modification.

It belongs to the sodium:neurotransmitter symporter (SNF) (TC 2.A.22) family. SLC6A19 subfamily. In terms of assembly, interacts in a tissue-specific manner with ACE2 in small intestine and with CLTRN in the kidney. Interacts with CLTRN; this interaction is required for trafficking of SLC6A19 to the plasma membrane and for its catalytic activation in kidneys. Interacts with ACE2; this interaction is required for trafficking of SLC6A19 to the plasma membrane and for its catalytic activation in intestine. Interacts with ANPEP; the interaction positively regulates its amino acid transporter activity.

The protein localises to the membrane. It catalyses the reaction L-alanine(in) + Na(+)(in) = L-alanine(out) + Na(+)(out). The enzyme catalyses L-cysteine(in) + Na(+)(in) = L-cysteine(out) + Na(+)(out). The catalysed reaction is L-glutamine(in) + Na(+)(in) = L-glutamine(out) + Na(+)(out). It carries out the reaction glycine(in) + Na(+)(in) = glycine(out) + Na(+)(out). It catalyses the reaction L-isoleucine(in) + Na(+)(in) = L-isoleucine(out) + Na(+)(out). The enzyme catalyses L-leucine(in) + Na(+)(in) = L-leucine(out) + Na(+)(out). The catalysed reaction is L-methionine(in) + Na(+)(in) = L-methionine(out) + Na(+)(out). It carries out the reaction L-phenylalanine(in) + Na(+)(in) = L-phenylalanine(out) + Na(+)(out). It catalyses the reaction L-serine(in) + Na(+)(in) = L-serine(out) + Na(+)(out). The enzyme catalyses L-tryptophan(in) + Na(+)(in) = L-tryptophan(out) + Na(+)(out). The catalysed reaction is L-tyrosine(in) + Na(+)(in) = L-tyrosine(out) + Na(+)(out). It carries out the reaction L-valine(in) + Na(+)(in) = L-valine(out) + Na(+)(out). In terms of biological role, transporter that mediates resorption of neutral amino acids across the apical membrane of renal and intestinal epithelial cells. This uptake is sodium-dependent and chloride-independent. Requires CLTRN in kidney or ACE2 in intestine for cell surface expression and amino acid transporter activity. In Pongo abelii (Sumatran orangutan), this protein is Sodium-dependent neutral amino acid transporter B(0)AT1 (SLC6A19).